Consider the following 452-residue polypeptide: Asparagine--tRNA ligase (452 aa).

It belongs to the class-II aminoacyl-tRNA synthetase family. Homodimer.

It localises to the cytoplasm. It carries out the reaction tRNA(Asn) + L-asparagine + ATP = L-asparaginyl-tRNA(Asn) + AMP + diphosphate + H(+). The sequence is that of Asparagine--tRNA ligase from Mycoplasma mycoides subsp. mycoides SC (strain CCUG 32753 / NCTC 10114 / PG1).